Here is a 301-residue protein sequence, read N- to C-terminus: Probable alpha-L-glutamate ligase 1 (301 aa).

Positions 104-287 (LQLLSRKGIG…VTEPIVEYIE (184 aa)) constitute an ATP-grasp domain. Residues Lys141, 178–179 (EY), Asp187, and 211–213 (RSN) each bind ATP. Mg(2+) is bound by residues Asp248, Glu260, and Asn262. Positions 248, 260, and 262 each coordinate Mn(2+).

The protein belongs to the RimK family. It depends on Mg(2+) as a cofactor. Mn(2+) is required as a cofactor.

The protein is Probable alpha-L-glutamate ligase 1 of Shewanella sp. (strain ANA-3).